Reading from the N-terminus, the 168-residue chain is Photosystem I assembly protein Ycf3 (168 aa).

TPR repeat units follow at residues 35–68, 72–105, and 120–153; these read AFTY…EIDP, SYIL…NPFL, and GEQA…TPGN.

The protein belongs to the Ycf3 family.

The protein localises to the plastid. It localises to the chloroplast thylakoid membrane. Its function is as follows. Essential for the assembly of the photosystem I (PSI) complex. May act as a chaperone-like factor to guide the assembly of the PSI subunits. The protein is Photosystem I assembly protein Ycf3 of Gossypium barbadense (Sea Island cotton).